A 36-amino-acid chain; its full sequence is MTAESMLANGAFIMIGLTLLGLAWGFVIIKLQGSEE.

The chain crosses the membrane as a helical span at residues N9–I29.

This sequence belongs to the PetM family. In terms of assembly, the 4 large subunits of the cytochrome b6-f complex are cytochrome b6, subunit IV (17 kDa polypeptide, PetD), cytochrome f and the Rieske protein, while the 4 small subunits are PetG, PetL, PetM and PetN. The complex functions as a dimer.

The protein localises to the cellular thylakoid membrane. Functionally, component of the cytochrome b6-f complex, which mediates electron transfer between photosystem II (PSII) and photosystem I (PSI), cyclic electron flow around PSI, and state transitions. The sequence is that of Cytochrome b6-f complex subunit 7 from Synechocystis sp. (strain ATCC 27184 / PCC 6803 / Kazusa).